A 186-amino-acid polypeptide reads, in one-letter code: ADP-ribosylation factor-like protein 8B (186 aa).

An intramembrane region (note=Mediates targeting to membranes) is located at residues 1–19 (MLALISRLLDWFRSLFWKE). GTP contacts are provided by residues 29–35 (QYSGKTT), 71–75 (DIGGQ), and 130–133 (NKRD). K141 participates in a covalent cross-link: Glycyl lysine isopeptide (Lys-Gly) (interchain with G-Cter in ubiquitin).

It belongs to the small GTPase superfamily. Arf family. As to quaternary structure, interacts with tubulin. Interacts with BORCS5; recruits ARL8B to lysosomes. Interacts with VPS41; the interaction mediates the recruitment of the HOPS complex to lysosomes. Interacts (GTP-bound form) with PLEKHM2 (via RUN domain); the interaction is required to recruit the motor protein kinesin-1 on lysosomes. Interacts (GTP-bound form) with PLEKHM1 (via RUN domain); the interaction is required for PLEKHM1 localization to lysosomes and for ARL8B function in delivery and degradation of endocytic and autophagic cargo in lysosomes. PLEKHM1 and PLEKHM2 compete for interaction with ARL8B. Interacts (GTP-bound form) with RUFY1; the interaction is required for RUFY1 endosomal location. When GTP-bound, interacts with RUFY3 and RUFY4, but not with RUFY1, nor RUFY2. In terms of processing, ubiquitinated at Lys-141 by RNF167, leading to its degradation.

Its subcellular location is the late endosome membrane. It localises to the lysosome membrane. It is found in the cytoplasm. The protein resides in the cytoskeleton. The protein localises to the spindle. Its subcellular location is the cell projection. It localises to the axon. It is found in the synapse. The protein resides in the cytolytic granule membrane. The protein localises to the early endosome membrane. It carries out the reaction GTP + H2O = GDP + phosphate + H(+). Its function is as follows. Small GTPase which cycles between active GTP-bound and inactive GDP-bound states. In its active state, binds to a variety of effector proteins playing a key role in the regulation of lysosomal positioning which is important for nutrient sensing, natural killer cell-mediated cytotoxicity and antigen presentation. Along with its effectors, orchestrates lysosomal transport and fusion. Localizes specifically to lysosomal membranes and mediates anterograde lysosomal motility by recruiting PLEKHM2, which in turn recruits the motor protein kinesin-1 on lysosomes. Required for lysosomal and cytolytic granule exocytosis. Critical factor involved in NK cell-mediated cytotoxicity. Drives the polarization of cytolytic granules and microtubule-organizing centers (MTOCs) toward the immune synapse between effector NK lymphocytes and target cells. In neurons, mediates the anterograde axonal long-range transport of presynaptic lysosome-related vesicles required for presynaptic biogenesis and synaptic function. Also acts as a regulator of endosome to lysosome trafficking pathways of special significance for host defense. Recruits RUFY1 onto early endosomes regulating endosomes to trans-Golgi network proteins retrieval. Regulates cargo trafficking to lysosomes by binding to PLEKHM1 and recruiting the HOPS subunit VPS41, resulting in functional assembly of the HOPS complex on lysosomal membranes. Plays an important role in cargo delivery to lysosomes for antigen presentation and microbial killing. Directs the intersection of CD1d with lipid antigens in lysosomes, and plays a role in intersecting phagosomes with lysosomes to generate phagolysosomes that kill microbes. Involved in the process of MHC II presentation. Regulates the delivery of antigens to lysosomes and the formation of MHC II-peptide complexes through the recruitment of the HOPS complex to lysosomes allowing the fusion of late endosomes to lysosomes. May play a role in chromosome segregation. The polypeptide is ADP-ribosylation factor-like protein 8B (ARL8B) (Pongo abelii (Sumatran orangutan)).